The following is an 831-amino-acid chain: Periplasmic nitrate reductase (831 aa).

Residues 1 to 29 (MKISRRDFIKQTAITATASVAGVTLPAGA) constitute a signal peptide (tat-type signal). Positions 41–97 (LKWSKAPCRFCGTGCGVTVAVKDNKVVATQGDPQAEVNKGLNCVKGYFLSKIMYGQD) constitute a 4Fe-4S Mo/W bis-MGD-type domain. The [4Fe-4S] cluster site is built by cysteine 48, cysteine 51, cysteine 55, and cysteine 83. Residues lysine 85, glutamine 152, asparagine 177, cysteine 181, 214-221 (WGSNMAEM), 245-249 (STFTH), 264-266 (QTD), methionine 375, glutamine 379, asparagine 485, 511-512 (SD), lysine 534, aspartate 561, and 721-730 (TGRVLEHWHS) each bind Mo-bis(molybdopterin guanine dinucleotide). Tryptophan 797 is a binding site for substrate. Mo-bis(molybdopterin guanine dinucleotide)-binding residues include asparagine 805 and lysine 822.

It belongs to the prokaryotic molybdopterin-containing oxidoreductase family. NasA/NapA/NarB subfamily. In terms of assembly, component of the periplasmic nitrate reductase NapAB complex composed of NapA and NapB. [4Fe-4S] cluster serves as cofactor. It depends on Mo-bis(molybdopterin guanine dinucleotide) as a cofactor. Post-translationally, predicted to be exported by the Tat system. The position of the signal peptide cleavage has been experimentally proven.

It is found in the periplasm. It carries out the reaction 2 Fe(II)-[cytochrome] + nitrate + 2 H(+) = 2 Fe(III)-[cytochrome] + nitrite + H2O. Functionally, catalytic subunit of the periplasmic nitrate reductase complex NapAB. Receives electrons from NapB and catalyzes the reduction of nitrate to nitrite. The protein is Periplasmic nitrate reductase of Cupriavidus necator (strain ATCC 17699 / DSM 428 / KCTC 22496 / NCIMB 10442 / H16 / Stanier 337) (Ralstonia eutropha).